The following is a 159-amino-acid chain: ATP synthase subunit delta, mitochondrial (159 aa).

The transit peptide at 1–23 directs the protein to the mitochondrion; that stretch reads MFRLSAARTLAKSVNTVVAKRTY.

This sequence belongs to the ATPase epsilon chain family. In terms of assembly, F-type ATPases have 2 components, CF(1) - the catalytic core - and CF(0) - the membrane proton channel. CF(1) has five subunits: alpha(3), beta(3), gamma(1), delta(1), epsilon(1). CF(0) has three main subunits: a, b and c.

It is found in the mitochondrion. It localises to the mitochondrion inner membrane. Mitochondrial membrane ATP synthase (F(1)F(0) ATP synthase or Complex V) produces ATP from ADP in the presence of a proton gradient across the membrane which is generated by electron transport complexes of the respiratory chain. F-type ATPases consist of two structural domains, F(1) - containing the extramembraneous catalytic core, and F(0) - containing the membrane proton channel, linked together by a central stalk and a peripheral stalk. During catalysis, ATP turnover in the catalytic domain of F(1) is coupled via a rotary mechanism of the central stalk subunits to proton translocation. Part of the complex F(1) domain and of the central stalk which is part of the complex rotary element. Rotation of the central stalk against the surrounding alpha(3)beta(3) subunits leads to hydrolysis of ATP in three separate catalytic sites on the beta subunits. This Kluyveromyces lactis (strain ATCC 8585 / CBS 2359 / DSM 70799 / NBRC 1267 / NRRL Y-1140 / WM37) (Yeast) protein is ATP synthase subunit delta, mitochondrial (ATP16).